We begin with the raw amino-acid sequence, 371 residues long: 4-hydroxy-3-methylbut-2-en-1-yl diphosphate synthase (flavodoxin) (371 aa).

Residues Cys268, Cys271, Cys303, and Glu310 each contribute to the [4Fe-4S] cluster site.

Belongs to the IspG family. [4Fe-4S] cluster is required as a cofactor.

It carries out the reaction (2E)-4-hydroxy-3-methylbut-2-enyl diphosphate + oxidized [flavodoxin] + H2O + 2 H(+) = 2-C-methyl-D-erythritol 2,4-cyclic diphosphate + reduced [flavodoxin]. It functions in the pathway isoprenoid biosynthesis; isopentenyl diphosphate biosynthesis via DXP pathway; isopentenyl diphosphate from 1-deoxy-D-xylulose 5-phosphate: step 5/6. Functionally, converts 2C-methyl-D-erythritol 2,4-cyclodiphosphate (ME-2,4cPP) into 1-hydroxy-2-methyl-2-(E)-butenyl 4-diphosphate. This chain is 4-hydroxy-3-methylbut-2-en-1-yl diphosphate synthase (flavodoxin), found in Macrococcus caseolyticus (strain JCSC5402) (Macrococcoides caseolyticum).